A 679-amino-acid polypeptide reads, in one-letter code: Protein SQS1 (679 aa).

Disordered stretches follow at residues 1 to 40, 76 to 161, 242 to 315, and 391 to 419; these read MAKR…RNNS, DSMR…PEPK, VSEE…PGFG, and PEEP…QDDE. The segment covering 16–32 has biased composition (basic residues); sequence RGRRGGRAGHRGRGGRR. A compositionally biased stretch (acidic residues) spans 146 to 156; that stretch reads GDDEPEGEYEP. Residues 406–419 are compositionally biased toward acidic residues; sequence ENYDDSEEDEQDDE. Residues 514-576 form the R3H domain; that stretch reads GFHIENIIDE…HTRVLVQKGG (63 aa). The region spanning 633-679 is the G-patch domain; that stretch reads QDNVGRRLLEKLGWTHGEGLGVHGNKGISEPLMARVKKNRSGLRYTE.

The protein belongs to the SQS1 family.

It localises to the cytoplasm. Its subcellular location is the nucleus. May be involved in splicing. The sequence is that of Protein SQS1 (SQS1) from Eremothecium gossypii (strain ATCC 10895 / CBS 109.51 / FGSC 9923 / NRRL Y-1056) (Yeast).